The sequence spans 1353 residues: DNA-directed RNA polymerase subunit beta' (1353 aa).

Positions Met-1–Lys-117 are unknown. Residues Leu-118–Asn-1353 are DNA-directed RNA polymerase subunit beta'. Cys-189, Cys-191, Cys-203, and Cys-206 together coordinate Zn(2+). Asp-578, Asp-580, and Asp-582 together coordinate Mg(2+).

It belongs to the RNA polymerase beta' chain family. As to quaternary structure, the RNAP catalytic core consists of 2 alpha, 1 beta, 1 beta' and 1 omega subunit. When a sigma factor is associated with the core the holoenzyme is formed, which can initiate transcription. The cofactor is Mg(2+). Zn(2+) is required as a cofactor.

The catalysed reaction is RNA(n) + a ribonucleoside 5'-triphosphate = RNA(n+1) + diphosphate. Its function is as follows. DNA-dependent RNA polymerase catalyzes the transcription of DNA into RNA using the four ribonucleoside triphosphates as substrates. The polypeptide is DNA-directed RNA polymerase subunit beta' (Aster yellows witches'-broom phytoplasma (strain AYWB)).